Consider the following 175-residue polypeptide: Chromobox protein homolog hpl-2 (175 aa).

The Chromo domain maps to 19–78 (FMVEKVLDKRTGKAGRDEFLIQWQGFPESDSSWEPRENLQCVEMLDEFEREFSKREKPIR). The interval 71–109 (SKREKPIRKRHSQKPEPSEDQADPEEDKDEKKETNQNDK) is disordered. Residues 88–98 (SEDQADPEEDK) are compositionally biased toward acidic residues. Over residues 99–109 (DEKKETNQNDK) the composition is skewed to basic and acidic residues. One can recognise a Chromo 2; shadow subtype domain in the interval 115–172 (KQLKCIVGLTKGPGELHFLCKFSDDTARLLPAKEVNSRYPSQVIRYYESKLTIQDPKA).

As to quaternary structure, interacts with histone H3 when di-, or tri-methylated at 'Lys-27' (H3K27me2/me3), or tri-methylated at 'Lys-9' (H3K9me3). Interacts with Tar DNA-binding protein homolog tdp-1; interaction may maintain localization of hpl-2 to gene bodies. Interacts with histone H1 his-24, probably via interaction with hpl-1. Interacts with chromobox protein homolog hpl-1. In terms of assembly, may form homodimers. Interacts (via chromo (shadow subtype) domain) with zinc finger protein lin-13 (via PLVPV motif); the interaction is direct and influences localization of hpl-2 to nuclear foci.

It localises to the nucleus. Its subcellular location is the chromosome. In terms of biological role, seems to be involved in transcriptional silencing in heterochromatin-like complexes. Probably does not act as global transcriptional repressor, instead targeting a subset of genes. Involved in RNA processing mediated by Tar DNA-binding protein homolog tdp-1. Plays a role in linking epigenetic regulation with the innate immune response. Involved in the endoplasmic reticulum (ER) stress response via modulation of the unfolded protein response (UPR), acting mainly through the IRE1-XBP1 pathway and perhaps, to a lesser extent, through the autophagy pathway. May act in a common pathway with retinoblastoma-like protein homolog lin-35 and zinc finger protein lin-13 to influence the ER stress response in the intestine. Plays a role in the formation of the vulva and in fertility, acting together with a CoREST-like complex, and chromobox protein homolog hpl-1. Acting in concert with hpl-1 and histone H1 protein his-24, involved in reproduction, somatic gonad development, male tail development and vulval cell fate specification; perhaps as a result of modulating expression of Hox genes mab-5 and egl-5. In vulval cell fate specification may act by repressing transcription, of EGF family gene lin-3 in hypodermal hyp7, and of homeobox lin-39 in vulval precursor cells (VPC). Role in growth and somatic gonad development is antagonized by histone-lysine N-methyltransferase set-2/SET1. Required for larval development, acting redundantly with hpl-1. Plays a role in regulation of the developmentally arrested larval state known as dauer, longevity, and lipid metabolism. The protein is Chromobox protein homolog hpl-2 of Caenorhabditis elegans.